The sequence spans 302 residues: Pseudouridine-5'-phosphate glycosidase (302 aa).

Catalysis depends on Glu-25, which acts as the Proton donor. Substrate is bound by residues Lys-86 and Val-106. Position 138 (Asp-138) interacts with Mn(2+). A substrate-binding site is contributed by 140–142 (SAD). Lys-159 (nucleophile) is an active-site residue.

It belongs to the pseudouridine-5'-phosphate glycosidase family. As to quaternary structure, homotrimer. Mn(2+) is required as a cofactor.

It carries out the reaction D-ribose 5-phosphate + uracil = psi-UMP + H2O. Catalyzes the reversible cleavage of pseudouridine 5'-phosphate (PsiMP) to ribose 5-phosphate and uracil. Functions biologically in the cleavage direction, as part of a pseudouridine degradation pathway. The protein is Pseudouridine-5'-phosphate glycosidase of Glaesserella parasuis serovar 5 (strain SH0165) (Haemophilus parasuis).